A 279-amino-acid polypeptide reads, in one-letter code: Oxygen-dependent coproporphyrinogen-III oxidase (279 aa).

S102 provides a ligand contact to substrate. Positions 106 and 116 each coordinate a divalent metal cation. The active-site Proton donor is the H116. 118-120 (NTR) lines the substrate pocket. Residues H149 and H179 each contribute to the a divalent metal cation site. The tract at residues 244–279 (YVEFNLLYDRGTKFGLMTDGNVEAILMSLPPEVKFN) is important for dimerization.

The protein belongs to the aerobic coproporphyrinogen-III oxidase family. As to quaternary structure, homodimer. It depends on a divalent metal cation as a cofactor.

The protein resides in the cytoplasm. The enzyme catalyses coproporphyrinogen III + O2 + 2 H(+) = protoporphyrinogen IX + 2 CO2 + 2 H2O. The protein operates within porphyrin-containing compound metabolism; protoporphyrin-IX biosynthesis; protoporphyrinogen-IX from coproporphyrinogen-III (O2 route): step 1/1. In terms of biological role, involved in the heme biosynthesis. Catalyzes the aerobic oxidative decarboxylation of propionate groups of rings A and B of coproporphyrinogen-III to yield the vinyl groups in protoporphyrinogen-IX. The protein is Oxygen-dependent coproporphyrinogen-III oxidase of Rickettsia peacockii (strain Rustic).